The chain runs to 372 residues: 3,5-dihydroxyphenylacetyl-CoA synthase (372 aa).

Residue C160 is part of the active site.

The protein belongs to the thiolase-like superfamily. Chalcone/stilbene synthases family.

It carries out the reaction 4 malonyl-CoA + 4 H(+) = (3,5-dihydroxyphenyl)acetyl-CoA + 4 CO2 + 3 CoA + H2O. The protein operates within antibiotic biosynthesis. In terms of biological role, involved in the biosynthesis of the nonproteinogenic amino acid monomer (S)-3,5-dihydroxyphenylglycine (Dpg) responsible of the production of balhimycin antibiotic. Catalyzes the Claisen condensation of four molecules of malonyl-CoA to yield 3,5-dihydroxyphenylacetyl-CoA (DPA-CoA) and three free coenzyme A (CoA). DpgA requires the presence of the dehydratases DpgB and DpgD to facilitate the aromatization of the DPA-S-DgpA or DPA-S-CoA intermediate. The chain is 3,5-dihydroxyphenylacetyl-CoA synthase from Amycolatopsis balhimycina.